A 528-amino-acid polypeptide reads, in one-letter code: Phosphoenolpyruvate carboxykinase (ATP) (528 aa).

Positions 56, 192, and 198 each coordinate substrate. ATP-binding positions include lysine 198, histidine 217, and 233–241; that span reads GLSGTGKTT. Mn(2+)-binding residues include lysine 198 and histidine 217. Aspartate 254 contacts Mn(2+). ATP-binding residues include glutamate 282, arginine 319, and threonine 444. Arginine 319 contributes to the substrate binding site.

The protein belongs to the phosphoenolpyruvate carboxykinase (ATP) family. Mn(2+) serves as cofactor.

Its subcellular location is the cytoplasm. It catalyses the reaction oxaloacetate + ATP = phosphoenolpyruvate + ADP + CO2. The protein operates within carbohydrate biosynthesis; gluconeogenesis. Involved in the gluconeogenesis. Catalyzes the conversion of oxaloacetate (OAA) to phosphoenolpyruvate (PEP) through direct phosphoryl transfer between the nucleoside triphosphate and OAA. This chain is Phosphoenolpyruvate carboxykinase (ATP), found in Bacillus cereus (strain B4264).